A 435-amino-acid chain; its full sequence is Glucan 1,3-beta-glucosidase (435 aa).

A signal peptide spans 1–30 (MLFPVLHLPKAMKFSSFSLIASSLLSLVAA). Catalysis depends on Glu222, which acts as the Proton donor. 2 disulfides stabilise this stretch: Cys306/Cys432 and Cys331/Cys357. Catalysis depends on Glu323, which acts as the Nucleophile.

Belongs to the glycosyl hydrolase 5 (cellulase A) family.

The protein localises to the secreted. The catalysed reaction is Successive hydrolysis of beta-D-glucose units from the non-reducing ends of (1-&gt;3)-beta-D-glucans, releasing alpha-glucose.. In terms of biological role, beta-glucanases participate in the metabolism of beta-glucan, the main structural component of the cell wall. It could also function biosynthetically as a transglycosylase. The chain is Glucan 1,3-beta-glucosidase from Pichia angusta (Yeast).